The sequence spans 25 residues: Snake venom metalloproteinase catroxase (25 aa).

E9 is a Ca(2+) binding site.

The protein belongs to the venom metalloproteinase (M12B) family. In terms of assembly, monomer. The cofactor is Zn(2+). In terms of tissue distribution, expressed by the venom gland.

The protein resides in the secreted. Its activity is regulated as follows. Inhibited by EDTA, beta-mercaptoethanol, but not by PMSF, p-tosyl-L-phenylalanine chloromethyl ketone, p-tosyl-L-lysine chloromethyl ketone, soybean trypsin inhibitor and aprotinin. Functionally, metalloprotease that is highly active against alpha-(FGA) and beta-chains (FGB) of fibrinogen molecules. The sequence is that of Snake venom metalloproteinase catroxase from Crotalus atrox (Western diamondback rattlesnake).